Here is a 290-residue protein sequence, read N- to C-terminus: Eukaryotic translation initiation factor 3 subunit G (290 aa).

Disordered stretches follow at residues 1-35 and 157-200; these read MSRL…DGTK and ESTG…GERM. Residues 210-288 form the RRM domain; that stretch reads ATLRVTNVSE…LILRVEFAKR (79 aa).

It belongs to the eIF-3 subunit G family. In terms of assembly, component of the eukaryotic translation initiation factor 3 (eIF-3) complex.

It is found in the cytoplasm. In terms of biological role, RNA-binding component of the eukaryotic translation initiation factor 3 (eIF-3) complex, which is involved in protein synthesis of a specialized repertoire of mRNAs and, together with other initiation factors, stimulates binding of mRNA and methionyl-tRNAi to the 40S ribosome. The eIF-3 complex specifically targets and initiates translation of a subset of mRNAs involved in cell proliferation. This subunit can bind 18S rRNA. This is Eukaryotic translation initiation factor 3 subunit G (tif35) from Aspergillus clavatus (strain ATCC 1007 / CBS 513.65 / DSM 816 / NCTC 3887 / NRRL 1 / QM 1276 / 107).